The following is a 141-amino-acid chain: Putative nickel-responsive regulator (141 aa).

Ni(2+) is bound by residues H80, H91, H93, and C99.

Belongs to the transcriptional regulatory CopG/NikR family. Requires Ni(2+) as cofactor.

Functionally, transcriptional regulator. The polypeptide is Putative nickel-responsive regulator (Methanococcus maripaludis (strain C7 / ATCC BAA-1331)).